We begin with the raw amino-acid sequence, 81 residues long: uncharacterized protein (81 aa).

Positions 46-81 are disordered; that stretch reads ASSPVVKRKSLVKRKSPVKRSPLKKRSQMRTSPCEA. The segment covering 51–73 has biased composition (basic residues); the sequence is VKRKSLVKRKSPVKRSPLKKRSQ.

This is an uncharacterized protein from Frog virus 3 (isolate Goorha) (FV-3).